A 355-amino-acid chain; its full sequence is Peptide chain release factor 1 (355 aa).

At Gln-233 the chain carries N5-methylglutamine.

It belongs to the prokaryotic/mitochondrial release factor family. Post-translationally, methylated by PrmC. Methylation increases the termination efficiency of RF1.

It localises to the cytoplasm. Its function is as follows. Peptide chain release factor 1 directs the termination of translation in response to the peptide chain termination codons UAG and UAA. The protein is Peptide chain release factor 1 of Rickettsia typhi (strain ATCC VR-144 / Wilmington).